A 98-amino-acid chain; its full sequence is NADH-ubiquinone oxidoreductase chain 4L (98 aa).

3 helical membrane-spanning segments follow: residues 2 to 22 (PSISTNITLAFITALLGMLIF), 29 to 49 (SLLCLEGMMLSMFILSTLTIL), and 61 to 81 (ILLLVFAACEAAVGLALLVTV).

This sequence belongs to the complex I subunit 4L family. Core subunit of respiratory chain NADH dehydrogenase (Complex I) which is composed of 45 different subunits.

The protein resides in the mitochondrion inner membrane. The enzyme catalyses a ubiquinone + NADH + 5 H(+)(in) = a ubiquinol + NAD(+) + 4 H(+)(out). Functionally, core subunit of the mitochondrial membrane respiratory chain NADH dehydrogenase (Complex I) which catalyzes electron transfer from NADH through the respiratory chain, using ubiquinone as an electron acceptor. Part of the enzyme membrane arm which is embedded in the lipid bilayer and involved in proton translocation. This chain is NADH-ubiquinone oxidoreductase chain 4L (MT-ND4L), found in Hapalemur aureus (Golden bamboo lemur).